Reading from the N-terminus, the 313-residue chain is Protochlorophyllide reductase (313 aa).

The protein belongs to the short-chain dehydrogenases/reductases (SDR) family. POR subfamily.

The protein localises to the plastid. It localises to the chloroplast. It carries out the reaction chlorophyllide a + NADP(+) = protochlorophyllide a + NADPH + H(+). The protein operates within porphyrin-containing compound metabolism; chlorophyll biosynthesis. Phototransformation of protochlorophyllide (Pchlide) to chlorophyllide (Chlide). The polypeptide is Protochlorophyllide reductase (Avena sativa (Oat)).